The following is a 223-amino-acid chain: Methanol utilization control regulatory protein MoxX (223 aa).

The Response regulatory domain maps to 16–133; sequence QILIVDDHPV…EICAAFTEVA (118 aa). Positions 155–220 constitute an HTH luxR-type domain; the sequence is PGTSAPRLTG…DLVVKGIRYF (66 aa). Residues 179-198 constitute a DNA-binding region (H-T-H motif); it reads YRDIADRACISYKTVSNVSL.

In terms of processing, phosphorylated by MoxY.

The protein localises to the cytoplasm. In terms of biological role, member of the two-component regulatory system MoxY/MoxX probably involved in the regulation of the methanol dehydrogenase expression. The protein is Methanol utilization control regulatory protein MoxX (moxX) of Paracoccus denitrificans.